The chain runs to 318 residues: Methionyl-tRNA formyltransferase (318 aa).

112-115 (SILP) contributes to the (6S)-5,6,7,8-tetrahydrofolate binding site.

The protein belongs to the Fmt family.

It carries out the reaction L-methionyl-tRNA(fMet) + (6R)-10-formyltetrahydrofolate = N-formyl-L-methionyl-tRNA(fMet) + (6S)-5,6,7,8-tetrahydrofolate + H(+). Its function is as follows. Attaches a formyl group to the free amino group of methionyl-tRNA(fMet). The formyl group appears to play a dual role in the initiator identity of N-formylmethionyl-tRNA by promoting its recognition by IF2 and preventing the misappropriation of this tRNA by the elongation apparatus. This Shewanella baltica (strain OS185) protein is Methionyl-tRNA formyltransferase.